A 503-amino-acid polypeptide reads, in one-letter code: Cytochrome P450 714C1 (503 aa).

Topologically, residues 1–6 (MEKLLA) are lumenal. The helical; Signal-anchor for type III membrane protein transmembrane segment at 7-27 (LIVVLVILLSLALFYLCNILW) threads the bilayer. At 28-503 (LRAVKIRKKL…GLPLMVTKLP (476 aa)) the chain is on the cytoplasmic side. C450 contacts heme.

The protein belongs to the cytochrome P450 family. It depends on heme as a cofactor.

Its subcellular location is the membrane. Probably not involved in gibberellin metabolism since over-expression of CYP714C1 in a heterologous system does not induce semi-dwarfism. The sequence is that of Cytochrome P450 714C1 (CYP714C1) from Oryza sativa subsp. japonica (Rice).